The sequence spans 320 residues: Dual oxidase maturation factor 2 (320 aa).

A helical transmembrane segment spans residues 22–42; that stretch reads VPLLIVILVFLSLAASFLFIL. Over 43–51 the chain is Cytoplasmic; it reads PGIRGHSRW. The helical transmembrane segment at 52-72 threads the bilayer; the sequence is FWLVRVLLSLFIGAEIVAVHF. The Extracellular portion of the chain corresponds to 73 to 183; that stretch reads SGDWFVGRVW…HLAGHYAAAT (111 aa). 3 N-linked (GlcNAc...) asparagine glycosylation sites follow: Asn-84, Asn-109, and Asn-121. A helical transmembrane segment spans residues 184–204; that stretch reads LWVAFCFWIIANALLSMPAPL. At 205-206 the chain is on the cytoplasmic side; sequence YG. A helical transmembrane segment spans residues 207–227; the sequence is GLALLTTGAFTLFGVFAFASI. The Extracellular portion of the chain corresponds to 228–249; the sequence is SSVPLCHFRLGSAVLTPYYGAS. A helical membrane pass occupies residues 250–270; it reads FWLTLATGILSLLLGGAVVIL. The Cytoplasmic segment spans residues 271 to 320; it reads HYTRPSALRSFLDLSVKDCSNQAKGNSPLTLNNPQHEQLKSPDLNITTLL.

Belongs to the DUOXA family. As to quaternary structure, heterodimer with DUXA2; disulfide-linked. Interacts with CSNK1G2. N-glycosylated.

It localises to the endoplasmic reticulum membrane. Required for the maturation and the transport from the endoplasmic reticulum to the plasma membrane of functional DUOX2. May play a role in thyroid hormone synthesis. The chain is Dual oxidase maturation factor 2 (Duoxa2) from Mus musculus (Mouse).